Reading from the N-terminus, the 181-residue chain is ATP-dependent protease subunit HslV (181 aa).

The active site involves Thr-7. The Na(+) site is built by Ala-166, Cys-169, and Thr-172.

Belongs to the peptidase T1B family. HslV subfamily. In terms of assembly, a double ring-shaped homohexamer of HslV is capped on each side by a ring-shaped HslU homohexamer. The assembly of the HslU/HslV complex is dependent on binding of ATP.

It localises to the cytoplasm. It catalyses the reaction ATP-dependent cleavage of peptide bonds with broad specificity.. With respect to regulation, allosterically activated by HslU binding. Its function is as follows. Protease subunit of a proteasome-like degradation complex believed to be a general protein degrading machinery. The sequence is that of ATP-dependent protease subunit HslV from Anaeromyxobacter dehalogenans (strain 2CP-C).